A 145-amino-acid polypeptide reads, in one-letter code: Lysozyme-like protein 4 (145 aa).

The signal sequence occupies residues Met-1–Thr-19. Residues Ala-20–Leu-145 form the C-type lysozyme domain. Intrachain disulfides connect Cys-25/Cys-143, Cys-49/Cys-130, Cys-84/Cys-95, and Cys-91/Cys-109. The active site involves Glu-54.

The protein belongs to the glycosyl hydrolase 22 family. In terms of assembly, monomer.

The protein resides in the secreted. The protein localises to the cytoplasmic vesicle. Its subcellular location is the secretory vesicle. It localises to the acrosome. It is found in the cell projection. The protein resides in the cilium. The protein localises to the flagellum. Functionally, may be involved in fertilization. Has no detectable bacteriolytic and lysozyme activities in vitro. This chain is Lysozyme-like protein 4 (LYZL4), found in Bos taurus (Bovine).